Reading from the N-terminus, the 301-residue chain is N-acetylmuramic acid 6-phosphate etherase (301 aa).

The region spanning 57–220 (IAETFMKNGR…TTGAMIKTGK (164 aa)) is the SIS domain. Glu85 (proton donor) is an active-site residue. Residue Glu116 is part of the active site.

This sequence belongs to the GCKR-like family. MurNAc-6-P etherase subfamily. Homodimer.

The catalysed reaction is N-acetyl-D-muramate 6-phosphate + H2O = N-acetyl-D-glucosamine 6-phosphate + (R)-lactate. The protein operates within amino-sugar metabolism; 1,6-anhydro-N-acetylmuramate degradation. It participates in amino-sugar metabolism; N-acetylmuramate degradation. It functions in the pathway cell wall biogenesis; peptidoglycan recycling. Its function is as follows. Specifically catalyzes the cleavage of the D-lactyl ether substituent of MurNAc 6-phosphate, producing GlcNAc 6-phosphate and D-lactate. Together with AnmK, is also required for the utilization of anhydro-N-acetylmuramic acid (anhMurNAc) either imported from the medium or derived from its own cell wall murein, and thus plays a role in cell wall recycling. The protein is N-acetylmuramic acid 6-phosphate etherase of Pasteurella multocida (strain Pm70).